We begin with the raw amino-acid sequence, 407 residues long: uncharacterized protein (407 aa).

2 disordered regions span residues 1 to 62 (MTGR…NGDP) and 350 to 379 (SVTP…KPSS). The segment covering 17–30 (PVEKMPRFQREHGA) has biased composition (basic and acidic residues).

This is an uncharacterized protein from Ictaluridae (bullhead catfishes).